Here is a 236-residue protein sequence, read N- to C-terminus: MQQNTNVDPQEIAKFERMAETWWDLNGEFKPLHLLNPLRLNYIDQTAGGIFGKKVLDVGCGGGILSESMARIGAIVDGLDMGEEPLEVARLHALETGVSINYVKNTAEAHREDHREYYDVVTCMEMLEHVPDPQSVIQACCDMVKPGGFVFFSTINRNVRSFVETIIGAEYLLKMLPIGTHDHNKFIKPSELIDLVDNTELICKDALGITYNPLTGIFKYTSKVDVNYMIATQKVD.

S-adenosyl-L-methionine contacts are provided by Arg39, Gly59, Asp80, and Met124.

The protein belongs to the methyltransferase superfamily. UbiG/COQ3 family.

It catalyses the reaction a 3-demethylubiquinol + S-adenosyl-L-methionine = a ubiquinol + S-adenosyl-L-homocysteine + H(+). The catalysed reaction is a 3-(all-trans-polyprenyl)benzene-1,2-diol + S-adenosyl-L-methionine = a 2-methoxy-6-(all-trans-polyprenyl)phenol + S-adenosyl-L-homocysteine + H(+). The protein operates within cofactor biosynthesis; ubiquinone biosynthesis. Functionally, O-methyltransferase that catalyzes the 2 O-methylation steps in the ubiquinone biosynthetic pathway. The polypeptide is Ubiquinone biosynthesis O-methyltransferase (Shewanella oneidensis (strain ATCC 700550 / JCM 31522 / CIP 106686 / LMG 19005 / NCIMB 14063 / MR-1)).